A 328-amino-acid chain; its full sequence is Glycerol-3-phosphate dehydrogenase [NAD(P)+] (328 aa).

The NADPH site is built by tryptophan 11, arginine 30, and lysine 103. Positions 103, 132, and 134 each coordinate sn-glycerol 3-phosphate. Alanine 136 contributes to the NADPH binding site. Residues lysine 187, aspartate 240, serine 250, arginine 251, and asparagine 252 each coordinate sn-glycerol 3-phosphate. Residue lysine 187 is the Proton acceptor of the active site. An NADPH-binding site is contributed by arginine 251. Residues valine 275 and glutamate 277 each coordinate NADPH.

This sequence belongs to the NAD-dependent glycerol-3-phosphate dehydrogenase family.

The protein resides in the cytoplasm. It catalyses the reaction sn-glycerol 3-phosphate + NAD(+) = dihydroxyacetone phosphate + NADH + H(+). The enzyme catalyses sn-glycerol 3-phosphate + NADP(+) = dihydroxyacetone phosphate + NADPH + H(+). It participates in membrane lipid metabolism; glycerophospholipid metabolism. Catalyzes the reduction of the glycolytic intermediate dihydroxyacetone phosphate (DHAP) to sn-glycerol 3-phosphate (G3P), the key precursor for phospholipid synthesis. This chain is Glycerol-3-phosphate dehydrogenase [NAD(P)+], found in Thiobacillus denitrificans (strain ATCC 25259 / T1).